The chain runs to 141 residues: Transcription antitermination protein NusB (141 aa).

It belongs to the NusB family.

In terms of biological role, involved in transcription antitermination. Required for transcription of ribosomal RNA (rRNA) genes. Binds specifically to the boxA antiterminator sequence of the ribosomal RNA (rrn) operons. The protein is Transcription antitermination protein NusB of Treponema pallidum (strain Nichols).